Reading from the N-terminus, the 125-residue chain is Large ribosomal subunit protein bL12 (125 aa).

It belongs to the bacterial ribosomal protein bL12 family. Homodimer. Part of the ribosomal stalk of the 50S ribosomal subunit. Forms a multimeric L10(L12)X complex, where L10 forms an elongated spine to which 2 to 4 L12 dimers bind in a sequential fashion. Binds GTP-bound translation factors.

Forms part of the ribosomal stalk which helps the ribosome interact with GTP-bound translation factors. Is thus essential for accurate translation. The protein is Large ribosomal subunit protein bL12 of Ruegeria sp. (strain TM1040) (Silicibacter sp.).